Consider the following 197-residue polypeptide: Glycerol-3-phosphate acyltransferase (197 aa).

The next 6 membrane-spanning stretches (helical) occupy residues 1–21, 50–70, 77–97, 111–131, 136–156, and 157–177; these read MNILIIFVSYLLGSLPTGFLI, WPALIVFIIDVGKGLIAVKIA, GLIEVIAGISAITGHIWPIWL, MFLALSWKVGLASLGIFLIVL, FVSLSSISAAIFLPFFMFFYL, and GNYMHSYFFISLIVALLVIWK.

The protein belongs to the PlsY family. As to quaternary structure, probably interacts with PlsX.

The protein localises to the cell inner membrane. The catalysed reaction is an acyl phosphate + sn-glycerol 3-phosphate = a 1-acyl-sn-glycero-3-phosphate + phosphate. It functions in the pathway lipid metabolism; phospholipid metabolism. In terms of biological role, catalyzes the transfer of an acyl group from acyl-phosphate (acyl-PO(4)) to glycerol-3-phosphate (G3P) to form lysophosphatidic acid (LPA). This enzyme utilizes acyl-phosphate as fatty acyl donor, but not acyl-CoA or acyl-ACP. In Prochlorococcus marinus (strain MIT 9312), this protein is Glycerol-3-phosphate acyltransferase.